Consider the following 424-residue polypeptide: MSNYYYYYGGGRYDWLKTVEPTNFLKIGLPYQAHPLHLQHQTTTPPSILEKFKRADILLNEVKAEMDPLMLQPETEKKLFQILSSIDMFKGLRKKVEFTYNAQIVTNAWLKMYELLNTMNFNNTSQAFCNCELPGGFISAINHFNYTMMHYPTFNWVASSLYPSSETDALEDHYGLYQCNPDNWLMQSPLLKKNMDYNNGDVTIASNVKNLALRATQRLTPIHLYTADGGINVGHDYNKQEELNLKLHFGQALTGLLSLSKGGNMILKHYTLNHAFTLSLICVFSHFFEELYITKPTSSRPTNSETYIVGKNRLRLFTPKEEQVLLKRLEFFNDTPLVDLSLYQNLLESVYFAVETIHLKQQIEFLNFGMKCYRHFYNKIKLLNDYLAPKKKIFQDRWRVLNKLYVLEKKHKLKLCAASQGSVA.

Residues 103–315 (QIVTNAWLKM…TYIVGKNRLR (213 aa)) form the Adrift-type SAM-dependent 2'-O-MTase domain. Gly-135 and Asp-228 together coordinate S-adenosyl-L-methionine. The active-site Proton acceptor is Lys-268.

It is found in the virion. The sequence is that of Probable methyltransferase EP424R from Ornithodoros (relapsing fever ticks).